Reading from the N-terminus, the 150-residue chain is Large ribosomal subunit protein bL9 (150 aa).

The protein belongs to the bacterial ribosomal protein bL9 family.

Binds to the 23S rRNA. The sequence is that of Large ribosomal subunit protein bL9 from Thioalkalivibrio sulfidiphilus (strain HL-EbGR7).